The primary structure comprises 193 residues: Ion-translocating oxidoreductase complex subunit A (193 aa).

6 helical membrane passes run 5 to 25 (FLLFVGTVLVNNFVLVKFLGL), 39 to 59 (IGMGFATTFVMTLASVCSWLV), 62 to 82 (FILLPLDLIYLRTLSFILVIA), 102 to 122 (LLGIFLPLITTNCAVLGVALL), 134 to 154 (AIYGFGAAAGFSLVMVLFAAI), and 171 to 191 (SIGLITAGLMSLAFMGFSGLV).

This sequence belongs to the NqrDE/RnfAE family. As to quaternary structure, the complex is composed of six subunits: RnfA, RnfB, RnfC, RnfD, RnfE and RnfG.

The protein localises to the cell inner membrane. Functionally, part of a membrane-bound complex that couples electron transfer with translocation of ions across the membrane. The sequence is that of Ion-translocating oxidoreductase complex subunit A from Photorhabdus laumondii subsp. laumondii (strain DSM 15139 / CIP 105565 / TT01) (Photorhabdus luminescens subsp. laumondii).